The following is an 882-amino-acid chain: Alanine--tRNA ligase (882 aa).

The Zn(2+) site is built by His-563, His-567, Cys-665, and His-669.

It belongs to the class-II aminoacyl-tRNA synthetase family. It depends on Zn(2+) as a cofactor.

It is found in the cytoplasm. It catalyses the reaction tRNA(Ala) + L-alanine + ATP = L-alanyl-tRNA(Ala) + AMP + diphosphate. Catalyzes the attachment of alanine to tRNA(Ala) in a two-step reaction: alanine is first activated by ATP to form Ala-AMP and then transferred to the acceptor end of tRNA(Ala). Also edits incorrectly charged Ser-tRNA(Ala) and Gly-tRNA(Ala) via its editing domain. This chain is Alanine--tRNA ligase, found in Synechococcus sp. (strain RCC307).